The following is a 662-amino-acid chain: UvrABC system protein B (662 aa).

The Helicase ATP-binding domain occupies 31-188 (DNIEGGEKAQ…NDLVDIQFER (158 aa)). 44–51 (GATGTGKT) serves as a coordination point for ATP. The Beta-hairpin signature appears at 97-120 (YYDYYQPEAYVPSSDTYIEKDSSV). The 167-residue stretch at 435 to 601 (QIDDLLGEIN…TIKKEIRDLI (167 aa)) folds into the Helicase C-terminal domain. The region spanning 626–661 (KELVKKLEKQMQEAVEVLDFELAAQIRDMMLEVKAL) is the UVR domain.

The protein belongs to the UvrB family. In terms of assembly, forms a heterotetramer with UvrA during the search for lesions. Interacts with UvrC in an incision complex.

It is found in the cytoplasm. Functionally, the UvrABC repair system catalyzes the recognition and processing of DNA lesions. A damage recognition complex composed of 2 UvrA and 2 UvrB subunits scans DNA for abnormalities. Upon binding of the UvrA(2)B(2) complex to a putative damaged site, the DNA wraps around one UvrB monomer. DNA wrap is dependent on ATP binding by UvrB and probably causes local melting of the DNA helix, facilitating insertion of UvrB beta-hairpin between the DNA strands. Then UvrB probes one DNA strand for the presence of a lesion. If a lesion is found the UvrA subunits dissociate and the UvrB-DNA preincision complex is formed. This complex is subsequently bound by UvrC and the second UvrB is released. If no lesion is found, the DNA wraps around the other UvrB subunit that will check the other stand for damage. This is UvrABC system protein B from Streptococcus pneumoniae (strain ATCC 700669 / Spain 23F-1).